Here is a 437-residue protein sequence, read N- to C-terminus: Trigger factor (437 aa).

The PPIase FKBP-type domain occupies 163 to 248 (SDRVIIDFEG…LNNVSEATLP (86 aa)).

The protein belongs to the FKBP-type PPIase family. Tig subfamily.

The protein localises to the cytoplasm. The catalysed reaction is [protein]-peptidylproline (omega=180) = [protein]-peptidylproline (omega=0). Involved in protein export. Acts as a chaperone by maintaining the newly synthesized protein in an open conformation. Functions as a peptidyl-prolyl cis-trans isomerase. This Neisseria meningitidis serogroup C / serotype 2a (strain ATCC 700532 / DSM 15464 / FAM18) protein is Trigger factor.